The following is a 354-amino-acid chain: UDP-3-O-acylglucosamine N-acyltransferase (354 aa).

His258 serves as the catalytic Proton acceptor.

Belongs to the transferase hexapeptide repeat family. LpxD subfamily. As to quaternary structure, homotrimer.

It carries out the reaction a UDP-3-O-[(3R)-3-hydroxyacyl]-alpha-D-glucosamine + a (3R)-hydroxyacyl-[ACP] = a UDP-2-N,3-O-bis[(3R)-3-hydroxyacyl]-alpha-D-glucosamine + holo-[ACP] + H(+). It participates in bacterial outer membrane biogenesis; LPS lipid A biosynthesis. Its function is as follows. Catalyzes the N-acylation of UDP-3-O-acylglucosamine using 3-hydroxyacyl-ACP as the acyl donor. Is involved in the biosynthesis of lipid A, a phosphorylated glycolipid that anchors the lipopolysaccharide to the outer membrane of the cell. This Sinorhizobium fredii (strain NBRC 101917 / NGR234) protein is UDP-3-O-acylglucosamine N-acyltransferase.